The sequence spans 313 residues: Porphobilinogen deaminase (313 aa).

S-(dipyrrolylmethanemethyl)cysteine is present on cysteine 241.

This sequence belongs to the HMBS family. In terms of assembly, monomer. It depends on dipyrromethane as a cofactor.

The enzyme catalyses 4 porphobilinogen + H2O = hydroxymethylbilane + 4 NH4(+). It functions in the pathway porphyrin-containing compound metabolism; protoporphyrin-IX biosynthesis; coproporphyrinogen-III from 5-aminolevulinate: step 2/4. It participates in porphyrin-containing compound metabolism; chlorophyll biosynthesis. Its function is as follows. Tetrapolymerization of the monopyrrole PBG into the hydroxymethylbilane pre-uroporphyrinogen in several discrete steps. This is Porphobilinogen deaminase from Chlorobium phaeobacteroides (strain DSM 266 / SMG 266 / 2430).